The sequence spans 629 residues: tRNA uridine 5-carboxymethylaminomethyl modification enzyme MnmG (629 aa).

FAD-binding positions include G13–G18, V125, and S180. G273–F287 contacts NAD(+). Q370 is an FAD binding site.

It belongs to the MnmG family. In terms of assembly, homodimer. Heterotetramer of two MnmE and two MnmG subunits. FAD is required as a cofactor.

Its subcellular location is the cytoplasm. NAD-binding protein involved in the addition of a carboxymethylaminomethyl (cmnm) group at the wobble position (U34) of certain tRNAs, forming tRNA-cmnm(5)s(2)U34. The sequence is that of tRNA uridine 5-carboxymethylaminomethyl modification enzyme MnmG from Shigella flexneri serotype 5b (strain 8401).